The chain runs to 950 residues: UPF0182 protein P9303_14611 (950 aa).

A run of 9 helical transmembrane segments spans residues 20–40 (LLLS…WLWF), 53–73 (WLWQ…CQLW), 102–122 (LLGC…LAWL), 141–161 (IWAL…MLGN), 173–193 (CFCF…ALAI), 209–229 (FGLG…AQLV), 259–279 (CDVM…LLWL), 308–328 (SLAS…PWIQ), and 335–355 (LIAS…APFV).

This sequence belongs to the UPF0182 family.

It is found in the cell membrane. The chain is UPF0182 protein P9303_14611 from Prochlorococcus marinus (strain MIT 9303).